The sequence spans 345 residues: Eukaryotic translation initiation factor 3 subunit F (345 aa).

The MPN domain maps to 30–166 (VVIHPQALFS…TRAYISAPVG (137 aa)). Positions 308-345 (GGESGNAESGQRGGQRGGKGGRGGQQRTQDRSGEEARA) are disordered. Residues 318–331 (QRGGQRGGKGGRGG) are compositionally biased toward gly residues. The segment covering 335–345 (TQDRSGEEARA) has biased composition (basic and acidic residues).

This sequence belongs to the eIF-3 subunit F family. As to quaternary structure, component of the eukaryotic translation initiation factor 3 (eIF-3) complex.

It is found in the cytoplasm. Its function is as follows. Component of the eukaryotic translation initiation factor 3 (eIF-3) complex, which is involved in protein synthesis of a specialized repertoire of mRNAs and, together with other initiation factors, stimulates binding of mRNA and methionyl-tRNAi to the 40S ribosome. The eIF-3 complex specifically targets and initiates translation of a subset of mRNAs involved in cell proliferation. The polypeptide is Eukaryotic translation initiation factor 3 subunit F (Aspergillus oryzae (strain ATCC 42149 / RIB 40) (Yellow koji mold)).